Consider the following 335-residue polypeptide: UPF0353 protein MAP_1207 (335 aa).

Helical transmembrane passes span 18-38 (WFFL…LMQL) and 67-87 (LPAI…AGPT). The VWFA domain occupies 98–294 (VVMLVIDVSQ…QELKSVYATL (197 aa)). The chain crosses the membrane as a helical span at residues 309 to 329 (VGWVRLGALVLALAALTALLI).

This sequence belongs to the UPF0353 family.

The protein resides in the cell membrane. This is UPF0353 protein MAP_1207 from Mycolicibacterium paratuberculosis (strain ATCC BAA-968 / K-10) (Mycobacterium paratuberculosis).